The sequence spans 410 residues: Argininosuccinate synthase (410 aa).

Residue 10 to 18 coordinates ATP; sequence AYSGGLDTS. L-citrulline contacts are provided by Y88 and S93. G118 lines the ATP pocket. Positions 120, 124, and 125 each coordinate L-aspartate. N124 is an L-citrulline binding site. R128, S177, S186, E262, and Y274 together coordinate L-citrulline.

This sequence belongs to the argininosuccinate synthase family. Type 1 subfamily. In terms of assembly, homotetramer.

The protein resides in the cytoplasm. The enzyme catalyses L-citrulline + L-aspartate + ATP = 2-(N(omega)-L-arginino)succinate + AMP + diphosphate + H(+). Its pathway is amino-acid biosynthesis; L-arginine biosynthesis; L-arginine from L-ornithine and carbamoyl phosphate: step 2/3. In Thermoanaerobacter sp. (strain X514), this protein is Argininosuccinate synthase.